A 1205-amino-acid chain; its full sequence is Nitric oxide synthase 3 (1205 aa).

Positions 1–73 (MGNLKSVGQE…PPEGPKFPRV (73 aa)) are disordered. G2 is lipidated: N-myristoyl glycine. 2 S-palmitoyl cysteine lipidation sites follow: C15 and C26. The span at 15-27 (CGLGLGLGLGLCG) shows a compositional bias: gly residues. Pro residues predominate over residues 33 to 47 (SPAPEPSRAPAPATP). Zn(2+) contacts are provided by C96 and C101. The tract at residues 100–488 (CCLGSLVLPR…PDPWKGSATK (389 aa)) is interaction with NOSIP. S104 lines the (6R)-L-erythro-5,6,7,8-tetrahydrobiopterin pocket. At S116 the chain carries Phosphoserine; by CDK5. C186 is a heme b binding site. L-arginine-binding residues include Q249, W358, Y359, E363, and N368. Positions 448, 449, and 462 each coordinate (6R)-L-erythro-5,6,7,8-tetrahydrobiopterin. Residue Y477 coordinates heme b. A calmodulin-binding region spans residues 492–512 (ITRKKTFKEVANAVKISASLM). T497 is subject to Phosphothreonine; by AMPK and PKA. The 184-residue stretch at 522–705 (ATILYASETG…AFRGWAKAAF (184 aa)) folds into the Flavodoxin-like domain. Positions 528, 529, 530, 532, 574, and 575 each coordinate FMN. Residues S617, S635, and S640 each carry the phosphoserine modification. Residues S656, C663, E689, and Q693 each contribute to the FMN site. Residues 758 to 1004 (RKMFQATVLS…IRGAPSFRLP (247 aa)) form the FAD-binding FR-type domain. R778 provides a ligand contact to NADP(+). H800 contacts FAD. The tract at residues 820–847 (EDPPPPTESVAVEQLEKGSPGGPPPSWV) is disordered. S838 bears the Phosphoserine mark. Positions 940, 942, 943, 958, 960, 964, 977, 978, and 979 each coordinate FAD. NADP(+) contacts are provided by T1018, R1051, S1080, R1081, K1087, Y1089, and Q1091. Residue T1177 is modified to Phosphothreonine. S1179 bears the Phosphoserine; by AMPK, PDPK1 and PKA mark. Position 1181 is a phosphoserine (S1181).

This sequence belongs to the NOS family. As to quaternary structure, homodimer. Interacts with NOSIP and NOSTRIN. Interacts with HSP90AB1. Forms a complex with ASL, ASS1 and SLC7A1; the complex regulates cell-autonomous L-arginine synthesis and citrulline recycling while channeling extracellular L-arginine to nitric oxide synthesis pathway. Heme b serves as cofactor. Requires FAD as cofactor. It depends on FMN as a cofactor. (6R)-L-erythro-5,6,7,8-tetrahydrobiopterin is required as a cofactor. In terms of processing, phosphorylation by AMPK at Ser-1179 in the presence of Ca(2+)-calmodulin (CaM) activates activity. In absence of Ca(2+)-calmodulin, AMPK also phosphorylates Thr-497, resulting in inhibition of activity. Phosphorylation of Ser-116 by CDK5 reduces activity.

It localises to the cell membrane. It is found in the membrane. Its subcellular location is the caveola. The protein localises to the cytoplasm. The protein resides in the cytoskeleton. It localises to the golgi apparatus. The enzyme catalyses 2 L-arginine + 3 NADPH + 4 O2 + H(+) = 2 L-citrulline + 2 nitric oxide + 3 NADP(+) + 4 H2O. With respect to regulation, stimulated by calcium/calmodulin. Inhibited by NOSIP and NOSTRIN. Produces nitric oxide (NO) which is implicated in vascular smooth muscle relaxation through a cGMP-mediated signal transduction pathway. NO mediates vascular endothelial growth factor (VEGF)-induced angiogenesis in coronary vessels and promotes blood clotting through the activation of platelets. In Bos taurus (Bovine), this protein is Nitric oxide synthase 3 (NOS3).